Here is a 291-residue protein sequence, read N- to C-terminus: MKIAILSRNSKLYSTRRLIEAGRTRGHTVRILDPLRCYMRIAADGFSLHYKGKPITGFDAVIPRIGASVTRYGTAVLRQFEFMGTYTPNPSDAILRSRDKLRAHQLLASQGIDMPVTVFGDNPDDTQDLLSMLGPPPHVVKLNEGAQGAGVILTEKASASRGVVEALRGLYANFIVQEFIGEAEGADLRCFVVGDRVVAAMRRQAADGDFRSNLHLGGTAAMAEASPQEQDVAVRSARALGLAVAGVDLIRSQRGPLVLEVNSTPGLEGVEGVCGVDVAGTIIQHLEQAIR.

The ATP-grasp domain occupies 104 to 287 (HQLLASQGID…VAGTIIQHLE (184 aa)). ATP contacts are provided by residues Lys-141, 178-179 (EF), Asp-187, and 211-213 (RSN). Mg(2+)-binding residues include Asp-248, Glu-260, and Asn-262. 3 residues coordinate Mn(2+): Asp-248, Glu-260, and Asn-262.

It belongs to the RimK family. Mg(2+) serves as cofactor. The cofactor is Mn(2+).

The protein is Probable alpha-L-glutamate ligase of Xanthomonas campestris pv. campestris (strain B100).